The chain runs to 454 residues: Aminodeoxychorismate synthase component 1 (454 aa).

L-tryptophan contacts are provided by residues Ser37, 44–47 (YNRF), and 241–243 (PFS). Glu259 (proton donor) is an active-site residue. Lys275 acts as the N6-(4-deoxychorismate)-lysine intermediate in catalysis.

The protein belongs to the anthranilate synthase component I family. Monomer. Heterodimer consisting of two non-identical subunits: a glutamine amidotransferase subunit (PabA) and a aminodeoxychorismate synthase subunit (PabB). The cofactor is Mg(2+).

The enzyme catalyses chorismate + L-glutamine = 4-amino-4-deoxychorismate + L-glutamate. The protein operates within cofactor biosynthesis; tetrahydrofolate biosynthesis; 4-aminobenzoate from chorismate: step 1/2. In terms of biological role, part of a heterodimeric complex that catalyzes the two-step biosynthesis of 4-amino-4-deoxychorismate (ADC), a precursor of p-aminobenzoate (PABA) and tetrahydrofolate. In the first step, a glutamine amidotransferase (PabA) generates ammonia as a substrate that, along with chorismate, is used in the second step, catalyzed by aminodeoxychorismate synthase (PabB) to produce ADC. The protein is Aminodeoxychorismate synthase component 1 (pabB) of Salmonella typhimurium (strain LT2 / SGSC1412 / ATCC 700720).